The following is a 235-amino-acid chain: Glucosamine-6-phosphate deaminase (235 aa).

The active-site Proton acceptor; for enolization step is aspartate 62. The active-site For ring-opening step is asparagine 128. Histidine 130 functions as the Proton acceptor; for ring-opening step in the catalytic mechanism. Glutamate 135 functions as the For ring-opening step in the catalytic mechanism.

The protein belongs to the glucosamine/galactosamine-6-phosphate isomerase family. NagB subfamily.

It carries out the reaction alpha-D-glucosamine 6-phosphate + H2O = beta-D-fructose 6-phosphate + NH4(+). It participates in amino-sugar metabolism; N-acetylneuraminate degradation; D-fructose 6-phosphate from N-acetylneuraminate: step 5/5. Its function is as follows. Catalyzes the reversible isomerization-deamination of glucosamine 6-phosphate (GlcN6P) to form fructose 6-phosphate (Fru6P) and ammonium ion. The sequence is that of Glucosamine-6-phosphate deaminase from Lactococcus lactis subsp. cremoris (strain SK11).